The chain runs to 473 residues: H(+)/Cl(-) exchange transporter ClcA (473 aa).

Residues 1-32 (MKTDTSTFLAQQIVRLRRRDQIRRLMQRDKTP) lie on the Cytoplasmic side of the membrane. The chain crosses the membrane as a helical span at residues 33-69 (LAILFMAAVVGTLTGLVGVAFEKAVSWVQNMRIGALV). Over 70 to 76 (QVADHAF) the chain is Periplasmic. The chain crosses the membrane as a helical span at residues 77–100 (LLWPLAFILSALLAMVGYFLVRKF). Positions 106–110 (GSGIP) match the Selectivity filter part_1 motif. Ser-107 contributes to the chloride binding site. The helical intramembrane region spans 109 to 116 (IPEIEGAL). The Cytoplasmic portion of the chain corresponds to 117 to 123 (EELRPVR). Helical transmembrane passes span 124 to 141 (WWRVLPVKFIGGMGTLGA) and 148 to 166 (EGPTVQIGGNLGRMVLDVF). The short motif at 146-150 (GREGP) is the Selectivity filter part_2 element. Residues 167-176 (RMRSAEARHT) are Cytoplasmic-facing. 2 consecutive intramembrane regions (helical) follow at residues 177–189 (LLATGAAAGLSAA) and 193–201 (PLAGILFII). Topologically, residues 202–214 (EEMRPQFRYNLIS) are cytoplasmic. Residues 215–232 (IKAVFTGVIMSSIVFRIF) form a helical membrane-spanning segment. Residues 233-252 (NGEAPIIEVGKLSDAPVNTL) lie on the Periplasmic side of the membrane. The helical transmembrane segment at 253-281 (WLYLILGIIFGCVGPVFNSLVLRTQDMFQ) threads the bilayer. At 282 to 287 (RFHGGE) the chain is on the cytoplasmic side. Residues 288–309 (IKKWVLMGGAIGGLCGILGLIE) traverse the membrane as a helical segment. Over 310–329 (PEAAGGGFNLIPIAAAGNFS) the chain is Periplasmic. The next 2 helical transmembrane spans lie at 330 to 349 (VGLLLFIFIARVVTTLLCFS) and 355 to 376 (GIFAPMLALGTLLGTAFGMAAA). The Selectivity filter part_3 motif lies at 355-359 (GIFAP). Residues Ile-356 and Phe-357 each coordinate chloride. The Periplasmic portion of the chain corresponds to 377–386 (VLFPQYHLEA). The helical intramembrane region spans 387–401 (GTFAIAGMGALMAAS). The segment at residues 402–404 (VRA) is an intramembrane region (note=Loop between two helices). Residues 405–416 (PLTGIVLVLEMT) constitute an intramembrane region (helical). An intramembrane region (note=Loop between two helices) is located at residues 417–421 (DNYQL). The chain crosses the membrane as a helical span at residues 422–438 (ILPMIITCLGATLLAQF). Over 439–473 (LGGKPLYSTILARTLAKQDAEQAAKNQNAPAGENT) the chain is Cytoplasmic. Tyr-445 contributes to the chloride binding site.

Belongs to the chloride channel (TC 2.A.49) family. ClcA subfamily. Homodimer.

It localises to the cell inner membrane. The catalysed reaction is 2 chloride(in) + H(+)(out) = 2 chloride(out) + H(+)(in). In terms of biological role, proton-coupled chloride transporter. Functions as antiport system and exchanges two chloride ions for 1 proton. Probably acts as an electrical shunt for an outwardly-directed proton pump that is linked to amino acid decarboxylation, as part of the extreme acid resistance (XAR) response. The polypeptide is H(+)/Cl(-) exchange transporter ClcA (Salmonella agona (strain SL483)).